The sequence spans 804 residues: uncharacterized protein (804 aa).

This is an uncharacterized protein from Methanothermobacter marburgensis (strain ATCC BAA-927 / DSM 2133 / JCM 14651 / NBRC 100331 / OCM 82 / Marburg) (Methanobacterium thermoautotrophicum).